The primary structure comprises 417 residues: MTSITHDQRPSKLVPPHGSAELKPLLLNGEARNQALKLASTLPAITLSSRERGDLIMFGIGGFTPLNGFMNQADWQGVVDNMRLQSGDNAGLFWPIPITLSAPKATADSLNQGDKVALVAQDGEIMGILTVEETYTIDKEHECQQVFTTTDPEHPGVQQVLEQGEVNIAGSVEVLSEGEFPTLYPEIYKTPAETRAILDNKGWQTVAAFQTRNPMHRSHEYLAKIAIEICDGVLIHSLLGALKPGDIPADVRQEAIKTLIDNYFRADTVIQAGYPLDMRYAGPREALLHAVFRQNYGCSHLIVGRDHAGVGDYYGAFDAQTIFDHVGKDDLITQPLKIGWTFWCNACNAMASDKTCPHEASEHVKVSGTKLRKALSEDLDVPENFSRPEVLQILRDYYAGIAFDERAEVKLVGASAV.

The protein belongs to the sulfate adenylyltransferase family.

The catalysed reaction is sulfate + ATP + H(+) = adenosine 5'-phosphosulfate + diphosphate. The protein operates within sulfur metabolism; hydrogen sulfide biosynthesis; sulfite from sulfate: step 1/3. The chain is Sulfate adenylyltransferase from Psychrobacter cryohalolentis (strain ATCC BAA-1226 / DSM 17306 / VKM B-2378 / K5).